The chain runs to 50 residues: Small ribosomal subunit protein eS31 (50 aa).

Residues Cys22, Cys25, Cys40, and Cys43 each contribute to the Zn(2+) site. The segment at 22–43 adopts a C4-type zinc-finger fold; the sequence is CPRCGPGVFMADHGDRWACGKC.

The protein belongs to the eukaryotic ribosomal protein eS31 family. As to quaternary structure, part of the 30S ribosomal subunit. Zn(2+) serves as cofactor.

This Pyrococcus horikoshii (strain ATCC 700860 / DSM 12428 / JCM 9974 / NBRC 100139 / OT-3) protein is Small ribosomal subunit protein eS31.